A 546-amino-acid chain; its full sequence is DNA ligase (546 aa).

Glutamate 244 is a binding site for ATP. The active-site N6-AMP-lysine intermediate is the lysine 246. ATP contacts are provided by arginine 251, arginine 266, glutamate 295, phenylalanine 334, arginine 405, and lysine 411.

The protein belongs to the ATP-dependent DNA ligase family. Mg(2+) serves as cofactor.

It catalyses the reaction ATP + (deoxyribonucleotide)n-3'-hydroxyl + 5'-phospho-(deoxyribonucleotide)m = (deoxyribonucleotide)n+m + AMP + diphosphate.. Its function is as follows. DNA ligase that seals nicks in double-stranded DNA during DNA replication, DNA recombination and DNA repair. This chain is DNA ligase, found in Methanocorpusculum labreanum (strain ATCC 43576 / DSM 4855 / Z).